Reading from the N-terminus, the 198-residue chain is Putative pseudouridine methyltransferase (198 aa).

2 residues coordinate S-adenosyl-L-methionine: methionine 132 and cysteine 186.

The protein belongs to the methyltransferase superfamily. TrmY family.

It localises to the cytoplasm. In Shewanella baltica (strain OS185), this protein is Putative pseudouridine methyltransferase.